A 158-amino-acid chain; its full sequence is Large ribosomal subunit protein uL18 (158 aa).

The protein belongs to the universal ribosomal protein uL18 family. As to quaternary structure, part of the 50S ribosomal subunit. Contacts the 5S and 23S rRNAs.

This is one of the proteins that bind and probably mediate the attachment of the 5S RNA into the large ribosomal subunit, where it forms part of the central protuberance. The chain is Large ribosomal subunit protein uL18 from Picrophilus torridus (strain ATCC 700027 / DSM 9790 / JCM 10055 / NBRC 100828 / KAW 2/3).